We begin with the raw amino-acid sequence, 231 residues long: Tol-Pal system protein TolQ (231 aa).

The next 3 helical transmembrane spans lie at 20-40 (IVVQ…WIMI), 134-154 (FLAT…VWGI), and 176-196 (IAEA…AVIA).

This sequence belongs to the ExbB/TolQ family. As to quaternary structure, the Tol-Pal system is composed of five core proteins: the inner membrane proteins TolA, TolQ and TolR, the periplasmic protein TolB and the outer membrane protein Pal. They form a network linking the inner and outer membranes and the peptidoglycan layer.

It is found in the cell inner membrane. Its function is as follows. Part of the Tol-Pal system, which plays a role in outer membrane invagination during cell division and is important for maintaining outer membrane integrity. This chain is Tol-Pal system protein TolQ, found in Pseudomonas aeruginosa (strain ATCC 15692 / DSM 22644 / CIP 104116 / JCM 14847 / LMG 12228 / 1C / PRS 101 / PAO1).